The chain runs to 1196 residues: Homeodomain-interacting protein kinase 2 (1196 aa).

S16 is subject to Phosphoserine. K32 is covalently cross-linked (Glycyl lysine isopeptide (Lys-Gly) (interchain with G-Cter in SUMO); alternate). A Glycyl lysine isopeptide (Lys-Gly) (interchain with G-Cter in SUMO2); alternate cross-link involves residue K32. The interval 50 to 69 is disordered; that stretch reads VYSQSKNIPPSQPASTTVST. The interval 97 to 230 is transcriptional corepression; it reads SASSTSVTGQ…TNEIVAIKIL (134 aa). 2 positions are modified to phosphoserine: S118 and S135. Residue T141 is modified to Phosphothreonine. Residues 189–520 form an interaction with DAXX region; the sequence is HEVLCSMTNT…DADKRVTPIE (332 aa). The 329-residue stretch at 199–527 folds into the Protein kinase domain; it reads YEVLEFLGRG…PIETLNHPFV (329 aa). Residues 205–213 and K228 each bind ATP; that span reads LGRGTFGQV. A phosphothreonine mark is found at T252 and T273. D324 serves as the catalytic Proton acceptor. Y361 is subject to Phosphotyrosine; by autocatalysis. At S441 the chain carries Phosphoserine. Residues T482, T517, and T566 each carry the phosphothreonine modification. Residues 539 to 844 form an interaction with SKI and SMAD1 region; it reads AHVKSCFQNM…KENTPPRCAM (306 aa). The tract at residues 600–800 is interaction with DAZAP2; that stretch reads SATLSLANPE…MRQQPTSTTS (201 aa). A phosphoserine mark is found at S634 and S668. Residue T687 is modified to Phosphothreonine. Residues 752-897 form an interaction with POU4F1 region; the sequence is RNTHAHGSHY…ITISSDTDEE (146 aa). Residues 774–876 are interaction with CTBP1; the sequence is HVTLPAAQPL…TRERQRQTIV (103 aa). Positions 787-897 are interaction with HMGA1; it reads VAHVMRQQPT…ITISSDTDEE (111 aa). Disordered regions lie at residues 792-847 and 891-963; these read RQQP…MVHS and SSDT…CTGN. The segment covering 793–829 has biased composition (polar residues); it reads QQPTSTTSSRKSKQHQSSVRNVSTCEVTSSQAISSPQ. The short motif at 802–805 is the Nuclear localization signal 1 (NLS1) element; the sequence is RKSK. Phosphoserine occurs at positions 815 and 827. A Nuclear localization signal 2 (NLS2) motif is present at residues 832–835; the sequence is KRVK. The segment at 839–934 is interaction with TP53 and TP73; the sequence is PPRCAMVHSS…PYSDSSSNTS (96 aa). Residues 873–907 form an interaction with UBE2I region; it reads QTIVIPDTPSPTVSVITISSDTDEEEEQKHAPTST. A localization to nuclear speckles region spans residues 873-980; it reads QTIVIPDTPS…PLKTQASEVL (108 aa). The interval 873–980 is required for localization to nuclear speckles; that stretch reads QTIVIPDTPS…PLKTQASEVL (108 aa). Residues 884–908 form an SUMO interaction motifs (SIM); required for nuclear localization and kinase activity region; it reads TVSVITISSDTDEEEEQKHAPTSTV. Residues 923-937 show a composition bias toward low complexity; that stretch reads DSPYSDSSSNTSPYS. S934 carries the phosphoserine modification. Residues 935-1050 form an interaction with AXIN1 region; that stretch reads PYSVQQRTGH…LSQAQQHMAA (116 aa). Residues 938 to 951 show a composition bias toward polar residues; the sequence is VQQRTGHNGTNTLD. Glycyl lysine isopeptide (Lys-Gly) (interchain with G-Cter in SUMO2) cross-links involve residues K953 and K973. An autoinhibitory domain (AID) region spans residues 984-1196; that stretch reads DSLGPAISAS…PAKVNQYPYI (213 aa). A phosphoserine mark is found at S991, S993, S1042, S1153, and S1186. Residues 991 to 1046 show a composition bias toward low complexity; the sequence is SASHHSSSFKSKSSSTVTSTSGHSSGSSSGAIAYRQQRPGPHFQQQQPLNLSQAQQ. The interval 991 to 1058 is disordered; it reads SASHHSSSFK…AADRTGSHRR (68 aa). K1189 is covalently cross-linked (Glycyl lysine isopeptide (Lys-Gly) (interchain with G-Cter in SUMO)).

The protein belongs to the protein kinase superfamily. CMGC Ser/Thr protein kinase family. HIPK subfamily. Interacts with CREB1, SIAH1, WSB1, CBX4, TRADD, p53/TP53, TP73, TP63, CREBBP, DAXX, P53DINP1, SKI, SMAD1, SMAD2 and SMAD3, but not SMAD4. Interacts with SP100; positively regulates TP53-dependent transcription. Interacts with ATF1, PML, RUNX1, EP300, NKX1-2, NKX2-5, UBE2I, HMGA1, CTBP1, AXIN1, NLK, MYB, POU4F1, POU4F2, POU4F3, UBE2I, UBL1 and ZBTB4. Probably part of a complex consisting of p53/TP53, HIPK2 and AXIN1. Interacts with DAZAP2; the interaction results in phosphorylation of DAZAP2 which causes localization of DAZAP2 to the nucleus, reduces interaction of DAZAP2 with HIPK2 and prevents DAZAP2-dependent degradation of HIPK2. Interacts with SIAH1; the interaction is promoted by DAZAP2 and results in SIAH1-mediated ubiquitination and subsequent proteasomal degradation of HIPK2. In terms of assembly, interacts with SPN/CD43 cytoplasmic tail. Sumoylated. When conjugated it is directed to nuclear speckles. Desumoylated by SENP1. Sumoylation on Lys-32 is promoted by the E3 SUMO-protein ligase CBX4. Post-translationally, autophosphorylation at Tyr-361 in the activation loop activates the kinase and promotes nuclear localization. In terms of processing, ubiquitinated by FBXO3, WSB1 and SIAH1, leading to rapid proteasome-dependent degradation. The degradation mediated by FBXO3, but not ubiquitination, is prevented in the presence of PML. The degradation mediated by WSB1 and SIAH1 is reversibly reduced upon DNA damage. Cleaved at Asp-923 and Asp-984 by CASP6 in a p53/TP53-dependent manner. The cleaved form lacks the autoinhibitory C-terminal domain (AID), resulting in a hyperactive kinase, which potentiates p53/TP53 Ser-46 phosphorylation and subsequent activation of the cell death machinery. As to expression, ubiquitous. Abundant in muscle, heart, small intestine, stomach, kidney and brain; and low in testis, skin and lung.

The protein localises to the nucleus. The protein resides in the PML body. Its subcellular location is the cytoplasm. The catalysed reaction is L-seryl-[protein] + ATP = O-phospho-L-seryl-[protein] + ADP + H(+). It catalyses the reaction L-threonyl-[protein] + ATP = O-phospho-L-threonyl-[protein] + ADP + H(+). In terms of biological role, serine/threonine-protein kinase involved in transcription regulation, p53/TP53-mediated cellular apoptosis and regulation of the cell cycle. Acts as a corepressor of several transcription factors, including SMAD1 and POU4F1/Brn3a and probably NK homeodomain transcription factors. Phosphorylates PDX1, ATF1, PML, p53/TP53, CREB1, CTBP1, CBX4, RUNX1, EP300, CTNNB1, HMGA1, ZBTB4 and DAZAP2. Inhibits cell growth and promotes apoptosis through the activation of p53/TP53 both at the transcription level and at the protein level (by phosphorylation and indirect acetylation). The phosphorylation of p53/TP53 may be mediated by a p53/TP53-HIPK2-AXIN1 complex. Involved in the response to hypoxia by acting as a transcriptional co-suppressor of HIF1A. Mediates transcriptional activation of TP73. In response to TGFB, cooperates with DAXX to activate JNK. Negative regulator through phosphorylation and subsequent proteasomal degradation of CTNNB1 and the antiapoptotic factor CTBP1. In the Wnt/beta-catenin signaling pathway acts as an intermediate kinase between MAP3K7/TAK1 and NLK to promote the proteasomal degradation of MYB. Phosphorylates CBX4 upon DNA damage and promotes its E3 SUMO-protein ligase activity. Activates CREB1 and ATF1 transcription factors by phosphorylation in response to genotoxic stress. In response to DNA damage, stabilizes PML by phosphorylation. PML, HIPK2 and FBXO3 may act synergically to activate p53/TP53-dependent transactivation. Promotes angiogenesis, and is involved in erythroid differentiation, especially during fetal liver erythropoiesis. Phosphorylation of RUNX1 and EP300 stimulates EP300 transcription regulation activity. Triggers ZBTB4 protein degradation in response to DNA damage. In response to DNA damage, phosphorylates DAZAP2 which localizes DAZAP2 to the nucleus, reduces interaction of DAZAP2 with HIPK2 and prevents DAZAP2-dependent ubiquitination of HIPK2 by E3 ubiquitin-protein ligase SIAH1 and subsequent proteasomal degradation. Modulates HMGA1 DNA-binding affinity. In response to high glucose, triggers phosphorylation-mediated subnuclear localization shifting of PDX1. Involved in the regulation of eye size, lens formation and retinal lamination during late embryogenesis. The sequence is that of Homeodomain-interacting protein kinase 2 (Hipk2) from Mus musculus (Mouse).